A 134-amino-acid polypeptide reads, in one-letter code: Photosystem II assembly factor lipoprotein Psb27 (134 aa).

Positions 1 to 21 (MKRFWAMVCALFLSVSLLLTS) are cleaved as a signal peptide. Residue cysteine 22 is the site of N-palmitoyl cysteine attachment. Cysteine 22 is lipidated: S-diacylglycerol cysteine.

It belongs to the Psb27 family. In terms of assembly, part of a photosystem II (PSII) assembly intermediate complex PSII-I; crystallized from a strain deleted of psbJ, it forms monomeric PSII before addition of the oxygen evolving complex. PSII-I includes 3 assembly factors not found in mature PSII (Psb27, Psb28 and Psb34). Binds to the lumenal side of PSII, adjacent to the CP43 (psbC) subunit.

It localises to the cellular thylakoid membrane. Functionally, plays a role in the repair and/or biogenesis of the calcium-manganese-oxide cluster on the lumenal face of the thylakoid membrane. Its presence in a photosystem II (PSII) preparation prevents binding of other extrinsic subunits PsbO, PsbU and PsbV, and thus assembly of calcium-manganese-oxide cluster. Psb27-containing complexes lack oxygen evolving activity and an oxidizable calcium-manganese-oxide cluster, but have a normal reaction center. In Thermosynechococcus vestitus (strain NIES-2133 / IAM M-273 / BP-1), this protein is Photosystem II assembly factor lipoprotein Psb27.